The chain runs to 246 residues: MTTHKFEHPLNEKTRIYLRVESLLRQAHLASGFADNHQYQLFFRALFDMVEIFEQIQLKSELAKDLEKQRLSYRHWLNVEGVDQEALNSLLNEIDVVHSQLMGAERFGQALKEDRFLSSIRQRFNLPGGSCCFDLPALHYWLHLPIERKKHDANQWQKSLKPLSDALTLWLKLARETGHFKAQIARAGFFQSDADEANILRLHIPMKYGVYPMISGHKNRFAIKFMAFENGQACSQDVEFELAVCS.

Belongs to the ZapD family. As to quaternary structure, interacts with FtsZ.

The protein localises to the cytoplasm. Functionally, cell division factor that enhances FtsZ-ring assembly. Directly interacts with FtsZ and promotes bundling of FtsZ protofilaments, with a reduction in FtsZ GTPase activity. The protein is Cell division protein ZapD of Vibrio parahaemolyticus serotype O3:K6 (strain RIMD 2210633).